We begin with the raw amino-acid sequence, 271 residues long: Formamidopyrimidine-DNA glycosylase (271 aa).

The active-site Schiff-base intermediate with DNA is Pro2. Glu3 functions as the Proton donor in the catalytic mechanism. Lys58 serves as the catalytic Proton donor; for beta-elimination activity. Residues His91, Arg110, and Arg152 each contribute to the DNA site. The segment at 237 to 271 (RVYDRAGQPCRVCGEPIRCVRLGQRATYYCPRCQR) adopts an FPG-type zinc-finger fold. The Proton donor; for delta-elimination activity role is filled by Arg261.

The protein belongs to the FPG family. Monomer. Zn(2+) is required as a cofactor.

It catalyses the reaction Hydrolysis of DNA containing ring-opened 7-methylguanine residues, releasing 2,6-diamino-4-hydroxy-5-(N-methyl)formamidopyrimidine.. The enzyme catalyses 2'-deoxyribonucleotide-(2'-deoxyribose 5'-phosphate)-2'-deoxyribonucleotide-DNA = a 3'-end 2'-deoxyribonucleotide-(2,3-dehydro-2,3-deoxyribose 5'-phosphate)-DNA + a 5'-end 5'-phospho-2'-deoxyribonucleoside-DNA + H(+). Its function is as follows. Involved in base excision repair of DNA damaged by oxidation or by mutagenic agents. Acts as a DNA glycosylase that recognizes and removes damaged bases. Has a preference for oxidized purines, such as 7,8-dihydro-8-oxoguanine (8-oxoG). Has AP (apurinic/apyrimidinic) lyase activity and introduces nicks in the DNA strand. Cleaves the DNA backbone by beta-delta elimination to generate a single-strand break at the site of the removed base with both 3'- and 5'-phosphates. The protein is Formamidopyrimidine-DNA glycosylase of Methylococcus capsulatus (strain ATCC 33009 / NCIMB 11132 / Bath).